Reading from the N-terminus, the 283-residue chain is Biotin synthase (283 aa).

The 230-residue stretch at 3-232 (KISNEIFLCS…NTRLMIAGGR (230 aa)) folds into the Radical SAM core domain. Residues Cys-21, Cys-25, and Cys-28 each coordinate [4Fe-4S] cluster. The [2Fe-2S] cluster site is built by Cys-65, Cys-100, and Arg-225.

Belongs to the radical SAM superfamily. Biotin synthase family. In terms of assembly, homodimer. [4Fe-4S] cluster serves as cofactor. It depends on [2Fe-2S] cluster as a cofactor.

The enzyme catalyses (4R,5S)-dethiobiotin + (sulfur carrier)-SH + 2 reduced [2Fe-2S]-[ferredoxin] + 2 S-adenosyl-L-methionine = (sulfur carrier)-H + biotin + 2 5'-deoxyadenosine + 2 L-methionine + 2 oxidized [2Fe-2S]-[ferredoxin]. It functions in the pathway cofactor biosynthesis; biotin biosynthesis; biotin from 7,8-diaminononanoate: step 2/2. In terms of biological role, catalyzes the conversion of dethiobiotin (DTB) to biotin by the insertion of a sulfur atom into dethiobiotin via a radical-based mechanism. The polypeptide is Biotin synthase (Helicobacter hepaticus (strain ATCC 51449 / 3B1)).